A 153-amino-acid chain; its full sequence is Ribosomal RNA large subunit methyltransferase H (153 aa).

Residues leucine 63, glycine 102, and 121 to 126 (FGKITL) contribute to the S-adenosyl-L-methionine site.

It belongs to the RNA methyltransferase RlmH family. Homodimer.

The protein resides in the cytoplasm. The catalysed reaction is pseudouridine(1915) in 23S rRNA + S-adenosyl-L-methionine = N(3)-methylpseudouridine(1915) in 23S rRNA + S-adenosyl-L-homocysteine + H(+). Its function is as follows. Specifically methylates the pseudouridine at position 1915 (m3Psi1915) in 23S rRNA. In Sulfurovum sp. (strain NBC37-1), this protein is Ribosomal RNA large subunit methyltransferase H.